Here is a 350-residue protein sequence, read N- to C-terminus: Biotin synthase (350 aa).

In terms of domain architecture, Radical SAM core spans 38–256 (NHVQVSTLLS…IAVARIMMPK (219 aa)). [4Fe-4S] cluster contacts are provided by C53, C57, and C60. [2Fe-2S] cluster is bound by residues C97, C128, C188, and R260.

It belongs to the radical SAM superfamily. Biotin synthase family. As to quaternary structure, homodimer. [4Fe-4S] cluster serves as cofactor. It depends on [2Fe-2S] cluster as a cofactor.

The catalysed reaction is (4R,5S)-dethiobiotin + (sulfur carrier)-SH + 2 reduced [2Fe-2S]-[ferredoxin] + 2 S-adenosyl-L-methionine = (sulfur carrier)-H + biotin + 2 5'-deoxyadenosine + 2 L-methionine + 2 oxidized [2Fe-2S]-[ferredoxin]. It participates in cofactor biosynthesis; biotin biosynthesis; biotin from 7,8-diaminononanoate: step 2/2. In terms of biological role, catalyzes the conversion of dethiobiotin (DTB) to biotin by the insertion of a sulfur atom into dethiobiotin via a radical-based mechanism. The chain is Biotin synthase from Vibrio cholerae serotype O1 (strain ATCC 39541 / Classical Ogawa 395 / O395).